The following is a 469-amino-acid chain: MRYISTRGQAPALNFEDVLLAGLASDGGLYVPENLPRFTLEEIASWVGLPYHELAFRVMRPFVAGSIADADFKKILEETYGVFAHDAVAPLRQLNGNEWVLELFHGPTLAFKDFALQLLGRLLDHVLAKRGERVVIMGATSGDTGSAAIEGCRRCDNVDIFIMHPHNRVSEVQRRQMTTILGDNIHNIAIEGNFDDCQEMVKASFADQGFLKGTRLVAVNSINWARIMAQIVYYFHAALQLGAPHRSVAFSVPTGNFGDIFAGYLARNMGLPVSQLIVATNRNDILHRFMSGNRYDKDTLHPSLSPSMDIMVSSNFERLLFDLHGRNGKAVAELLDAFKASGKLSVEDQRWTEARKLFDSLAVSDEQTCETIAEVYRSSGELLDPHTAIGVRAARECRRSLSVPMVTLGTAHPVKFPEAVEKAGIGQAPALPAHLADLFEREERCTVLPNELAKVQAFVSQHGNRGKPL.

K112 bears the N6-(pyridoxal phosphate)lysine mark.

It belongs to the threonine synthase family. The cofactor is pyridoxal 5'-phosphate.

It catalyses the reaction O-phospho-L-homoserine + H2O = L-threonine + phosphate. The protein operates within amino-acid biosynthesis; L-threonine biosynthesis; L-threonine from L-aspartate: step 5/5. Its function is as follows. Catalyzes the gamma-elimination of phosphate from L-phosphohomoserine and the beta-addition of water to produce L-threonine. The polypeptide is Threonine synthase (thrC) (Pseudomonas aeruginosa (strain ATCC 15692 / DSM 22644 / CIP 104116 / JCM 14847 / LMG 12228 / 1C / PRS 101 / PAO1)).